Consider the following 155-residue polypeptide: SsrA-binding protein (155 aa).

It belongs to the SmpB family.

The protein resides in the cytoplasm. In terms of biological role, required for rescue of stalled ribosomes mediated by trans-translation. Binds to transfer-messenger RNA (tmRNA), required for stable association of tmRNA with ribosomes. tmRNA and SmpB together mimic tRNA shape, replacing the anticodon stem-loop with SmpB. tmRNA is encoded by the ssrA gene; the 2 termini fold to resemble tRNA(Ala) and it encodes a 'tag peptide', a short internal open reading frame. During trans-translation Ala-aminoacylated tmRNA acts like a tRNA, entering the A-site of stalled ribosomes, displacing the stalled mRNA. The ribosome then switches to translate the ORF on the tmRNA; the nascent peptide is terminated with the 'tag peptide' encoded by the tmRNA and targeted for degradation. The ribosome is freed to recommence translation, which seems to be the essential function of trans-translation. The polypeptide is SsrA-binding protein (Geobacillus sp. (strain WCH70)).